Reading from the N-terminus, the 316-residue chain is MSQQFNVAIFGATGAVGETMLEVLQEREFPVDELFLLASERSEGKTYRFNGKTVRVQNVEEFDWSQVHIALFSAGGELSAHWAPIRAEAGVVVIDNTSHFRYDYDIPLVIPEVNPEAIAEFRNRNIIANPNCSTIQMLVALKPIYDAVGIERINVTTYQSVSGAGKAGIDELAGQTAKLLNGYPAETNTFSQQIAFNCIPQIDQFMDNGYTKEEMKMVWETQKIFNDPSIMVNPTCVRVPVFYGHAEAVHVETRAPIDAEQVMDMLDQTDGIELFRGADFPTQVRDAGGKDHVLVGRVRNDISHHSGVNLWVVADN.

NADP(+) is bound by residues 13-16 (TGAV) and 41-42 (RS). Arginine 101 contributes to the phosphate binding site. Catalysis depends on cysteine 132, which acts as the Acyl-thioester intermediate. Substrate is bound at residue glutamine 159. 162 to 163 (SG) is an NADP(+) binding site. A phosphate-binding site is contributed by lysine 216. Arginine 238 lines the substrate pocket. Histidine 245 serves as the catalytic Proton acceptor. An NADP(+)-binding site is contributed by asparagine 316.

It belongs to the aspartate-semialdehyde dehydrogenase family. In terms of assembly, homodimer.

The catalysed reaction is L-aspartate 4-semialdehyde + phosphate + NADP(+) = 4-phospho-L-aspartate + NADPH + H(+). It participates in amino-acid biosynthesis; L-lysine biosynthesis via DAP pathway; (S)-tetrahydrodipicolinate from L-aspartate: step 2/4. Its pathway is amino-acid biosynthesis; L-methionine biosynthesis via de novo pathway; L-homoserine from L-aspartate: step 2/3. It functions in the pathway amino-acid biosynthesis; L-threonine biosynthesis; L-threonine from L-aspartate: step 2/5. Catalyzes the NADPH-dependent formation of L-aspartate-semialdehyde (L-ASA) by the reductive dephosphorylation of L-aspartyl-4-phosphate. This Vibrio mimicus protein is Aspartate-semialdehyde dehydrogenase (asd).